Reading from the N-terminus, the 367-residue chain is tRNA N6-adenosine threonylcarbamoyltransferase (367 aa).

2 residues coordinate Fe cation: histidine 123 and histidine 127. Substrate is bound by residues 145 to 149 (LVSGG), aspartate 178, glycine 191, and asparagine 288. Aspartate 316 lines the Fe cation pocket.

The protein belongs to the KAE1 / TsaD family. Fe(2+) is required as a cofactor.

It localises to the cytoplasm. It catalyses the reaction L-threonylcarbamoyladenylate + adenosine(37) in tRNA = N(6)-L-threonylcarbamoyladenosine(37) in tRNA + AMP + H(+). Required for the formation of a threonylcarbamoyl group on adenosine at position 37 (t(6)A37) in tRNAs that read codons beginning with adenine. Is involved in the transfer of the threonylcarbamoyl moiety of threonylcarbamoyl-AMP (TC-AMP) to the N6 group of A37, together with TsaE and TsaB. TsaD likely plays a direct catalytic role in this reaction. In Caulobacter vibrioides (strain ATCC 19089 / CIP 103742 / CB 15) (Caulobacter crescentus), this protein is tRNA N6-adenosine threonylcarbamoyltransferase.